The sequence spans 130 residues: Vascular-related unknown protein 3 (130 aa).

A disordered region spans residues 45–81 (DDSSMMSDAASPMGCVEEDTASSPSNRTEGYSGMEDN).

Functionally, involved in the regulation of plant growth. This chain is Vascular-related unknown protein 3, found in Arabidopsis thaliana (Mouse-ear cress).